The following is a 315-amino-acid chain: MNIEWFAIGVGAIVVLYILYHFIKMIWSILGLYVFYQPIDLKKKAGASWAVITGGTDGIGKSFSFELAKRGFNIYIVSRTQSKLEQTKKEIMEKYSNVEVRFATFDFTNPSISDYKKLLSQLNEVSIGMLINNVGMLFEYPENLHKTVGGIDVVANVTILNTLPVTLLSAGILPQMVSRKTGIIVNIGSVAGAAKMAEWSVYSASKKYVEWLTGCLRKEYEHQGIIIQAITPALVATKLSGHTETSLFCPDSATFAKSALNTVGHTSQTTGYINHQIQCEMLALFPECFLDSFVKKSSVETREKALAKKENKHLL.

An NADP(+)-binding site is contributed by 47-76 (ASWAVITGGTDGIGKSFSFELAKRGFNIYI). Tyr202 is a catalytic residue.

Belongs to the short-chain dehydrogenases/reductases (SDR) family. 17-beta-HSD 3 subfamily.

In Caenorhabditis elegans, this protein is Putative steroid dehydrogenase 3 (stdh-3).